The sequence spans 285 residues: NADPH-dependent 7-cyano-7-deazaguanine reductase (285 aa).

Position 91–93 (91–93) interacts with substrate; sequence IES. Residue 93-94 coordinates NADPH; it reads SK. Cys-191 functions as the Thioimide intermediate in the catalytic mechanism. Asp-198 functions as the Proton donor in the catalytic mechanism. 230–231 contributes to the substrate binding site; that stretch reads HE. 259-260 is a binding site for NADPH; it reads RG.

This sequence belongs to the GTP cyclohydrolase I family. QueF type 2 subfamily. In terms of assembly, homodimer.

The protein localises to the cytoplasm. It carries out the reaction 7-aminomethyl-7-carbaguanine + 2 NADP(+) = 7-cyano-7-deazaguanine + 2 NADPH + 3 H(+). The protein operates within tRNA modification; tRNA-queuosine biosynthesis. Catalyzes the NADPH-dependent reduction of 7-cyano-7-deazaguanine (preQ0) to 7-aminomethyl-7-deazaguanine (preQ1). In Legionella pneumophila (strain Lens), this protein is NADPH-dependent 7-cyano-7-deazaguanine reductase.